We begin with the raw amino-acid sequence, 275 residues long: Large ribosomal subunit protein uL2 (275 aa).

The tract at residues 212–259 (RWKGIRPTNRGVTMNPVDHPHGGGEGKTSGGRHPVTPWGQPTRGYKTR) is disordered.

The protein belongs to the universal ribosomal protein uL2 family. As to quaternary structure, part of the 50S ribosomal subunit. Forms a bridge to the 30S subunit in the 70S ribosome.

Its function is as follows. One of the primary rRNA binding proteins. Required for association of the 30S and 50S subunits to form the 70S ribosome, for tRNA binding and peptide bond formation. It has been suggested to have peptidyltransferase activity; this is somewhat controversial. Makes several contacts with the 16S rRNA in the 70S ribosome. The chain is Large ribosomal subunit protein uL2 from Acidobacterium capsulatum (strain ATCC 51196 / DSM 11244 / BCRC 80197 / JCM 7670 / NBRC 15755 / NCIMB 13165 / 161).